We begin with the raw amino-acid sequence, 173 residues long: Photosystem I assembly protein Ycf3 (173 aa).

TPR repeat units follow at residues 35–68, 72–105, and 120–153; these read AYIYYREGFAAQNNGDYSEALENYEESLKLEENA, GETLKNMAIIYMSNGDEDKALDTYQKALEQNPKQ, and GRALQQNGKQDESDIWFDKAAEVWTKAVRLYPGG.

It belongs to the Ycf3 family.

It localises to the cellular thylakoid membrane. Its function is as follows. Essential for the assembly of the photosystem I (PSI) complex. May act as a chaperone-like factor to guide the assembly of the PSI subunits. In Prochlorococcus marinus (strain SARG / CCMP1375 / SS120), this protein is Photosystem I assembly protein Ycf3.